Consider the following 399-residue polypeptide: Elongation factor Tu (399 aa).

The 200-residue stretch at 10–209 folds into the tr-type G domain; it reads KPHVNIGTIG…EVDAYIPTPE (200 aa). The interval 19–26 is G1; sequence GHVDHGKT. GTP is bound at residue 19–26; the sequence is GHVDHGKT. Thr-26 serves as a coordination point for Mg(2+). The interval 60–64 is G2; that stretch reads GITIA. The segment at 81–84 is G3; the sequence is DCPG. GTP is bound by residues 81 to 85 and 136 to 139; these read DCPGH and NKQD. The segment at 136 to 139 is G4; the sequence is NKQD. The interval 174–176 is G5; sequence SAL.

This sequence belongs to the TRAFAC class translation factor GTPase superfamily. Classic translation factor GTPase family. EF-Tu/EF-1A subfamily. As to quaternary structure, monomer.

Its subcellular location is the cytoplasm. The catalysed reaction is GTP + H2O = GDP + phosphate + H(+). Its function is as follows. GTP hydrolase that promotes the GTP-dependent binding of aminoacyl-tRNA to the A-site of ribosomes during protein biosynthesis. This Helicobacter pylori (strain G27) protein is Elongation factor Tu.